The sequence spans 145 residues: D-aminoacyl-tRNA deacylase (145 aa).

A Gly-cisPro motif, important for rejection of L-amino acids motif is present at residues 137–138 (GP).

Belongs to the DTD family. As to quaternary structure, homodimer.

It localises to the cytoplasm. The enzyme catalyses glycyl-tRNA(Ala) + H2O = tRNA(Ala) + glycine + H(+). It catalyses the reaction a D-aminoacyl-tRNA + H2O = a tRNA + a D-alpha-amino acid + H(+). Functionally, an aminoacyl-tRNA editing enzyme that deacylates mischarged D-aminoacyl-tRNAs. Also deacylates mischarged glycyl-tRNA(Ala), protecting cells against glycine mischarging by AlaRS. Acts via tRNA-based rather than protein-based catalysis; rejects L-amino acids rather than detecting D-amino acids in the active site. By recycling D-aminoacyl-tRNA to D-amino acids and free tRNA molecules, this enzyme counteracts the toxicity associated with the formation of D-aminoacyl-tRNA entities in vivo and helps enforce protein L-homochirality. The polypeptide is D-aminoacyl-tRNA deacylase (Idiomarina loihiensis (strain ATCC BAA-735 / DSM 15497 / L2-TR)).